Here is a 246-residue protein sequence, read N- to C-terminus: Probable septum site-determining protein MinC (246 aa).

The protein belongs to the MinC family. In terms of assembly, interacts with MinD and FtsZ.

In terms of biological role, cell division inhibitor that blocks the formation of polar Z ring septums. Rapidly oscillates between the poles of the cell to destabilize FtsZ filaments that have formed before they mature into polar Z rings. Prevents FtsZ polymerization. In Pseudomonas syringae pv. tomato (strain ATCC BAA-871 / DC3000), this protein is Probable septum site-determining protein MinC.